The chain runs to 197 residues: uncharacterized protein (197 aa).

Positions 1–135 are disordered; that stretch reads MKTPWKFLAR…ERGKRANARV (135 aa). The span at 14-32 shows a compositional bias: polar residues; sequence RQPSGKTQESSAGNDTGSK. Positions 83–96 are enriched in basic and acidic residues; it reads IHADEAQTTARDEA. The span at 116-132 shows a compositional bias: basic residues; that stretch reads SQRKPRIKRRERGKRAN.

This sequence to Rhizobium NGR234A y4nF and y4aO.

This is an uncharacterized protein from Rhizobium meliloti (strain 1021) (Ensifer meliloti).